Here is a 453-residue protein sequence, read N- to C-terminus: CCA-adding enzyme (453 aa).

Positions 53 and 56 each coordinate ATP. CTP contacts are provided by S53 and K56. Mg(2+)-binding residues include D65, D67, and D119. The ATP site is built by H142, K161, and Y170. H142, K161, and Y170 together coordinate CTP.

The protein belongs to the tRNA nucleotidyltransferase/poly(A) polymerase family. Archaeal CCA-adding enzyme subfamily. Homodimer. Requires Mg(2+) as cofactor.

It catalyses the reaction a tRNA precursor + 2 CTP + ATP = a tRNA with a 3' CCA end + 3 diphosphate. The enzyme catalyses a tRNA with a 3' CCA end + 2 CTP + ATP = a tRNA with a 3' CCACCA end + 3 diphosphate. Its function is as follows. Catalyzes the addition and repair of the essential 3'-terminal CCA sequence in tRNAs without using a nucleic acid template. Adds these three nucleotides in the order of C, C, and A to the tRNA nucleotide-73, using CTP and ATP as substrates and producing inorganic pyrophosphate. tRNA 3'-terminal CCA addition is required both for tRNA processing and repair. Also involved in tRNA surveillance by mediating tandem CCA addition to generate a CCACCA at the 3' terminus of unstable tRNAs. While stable tRNAs receive only 3'-terminal CCA, unstable tRNAs are marked with CCACCA and rapidly degraded. This chain is CCA-adding enzyme, found in Pyrococcus furiosus (strain ATCC 43587 / DSM 3638 / JCM 8422 / Vc1).